The primary structure comprises 475 residues: NADH-quinone oxidoreductase subunit N (475 aa).

14 helical membrane passes run 7-27, 40-60, 74-94, 105-125, 127-147, 161-181, 191-211, 242-262, 266-286, 295-315, 321-341, 365-385, 399-419, and 448-468; these read ISIAAPEALLIGVALIGVLLG, LLGALALAGAAFLAASQSAVD, FIAIAKAVSYGVGAIALLVAG, FEYTLLVMFGSAGMGVMLSAN, LMTLYMGIETLSLSSYVLAAF, YFVLGALASGLLLFGCSLVYG, IAAADQSIGLTFGLVLILMAL, APKLATVAVLANIMFTVFGVY, WMLIIAIVSAISMLVGAFGGL, LAYSSIANVGYALMGVAAGEV, VLTYMTIYVITTLGMFGIVLA, LAVAMTVLVFSVAGIPPMAGF, ELYWLVAVGVIGSVVSLGYYL, and GATILAFPVLVIWIGWMTGII.

This sequence belongs to the complex I subunit 2 family. As to quaternary structure, NDH-1 is composed of 14 different subunits. Subunits NuoA, H, J, K, L, M, N constitute the membrane sector of the complex.

It localises to the cell inner membrane. It carries out the reaction a quinone + NADH + 5 H(+)(in) = a quinol + NAD(+) + 4 H(+)(out). Functionally, NDH-1 shuttles electrons from NADH, via FMN and iron-sulfur (Fe-S) centers, to quinones in the respiratory chain. The immediate electron acceptor for the enzyme in this species is believed to be ubiquinone. Couples the redox reaction to proton translocation (for every two electrons transferred, four hydrogen ions are translocated across the cytoplasmic membrane), and thus conserves the redox energy in a proton gradient. The sequence is that of NADH-quinone oxidoreductase subunit N from Hirschia baltica (strain ATCC 49814 / DSM 5838 / IFAM 1418).